A 333-amino-acid chain; its full sequence is Adenosine deaminase (333 aa).

Residues His12 and His14 each coordinate Zn(2+). Residues His14, Asp16, and Gly170 each coordinate substrate. His197 is a binding site for Zn(2+). Glu200 serves as the catalytic Proton donor. Asp278 contributes to the Zn(2+) binding site. Asp279 provides a ligand contact to substrate.

This sequence belongs to the metallo-dependent hydrolases superfamily. Adenosine and AMP deaminases family. Adenosine deaminase subfamily. Requires Zn(2+) as cofactor.

It catalyses the reaction adenosine + H2O + H(+) = inosine + NH4(+). The catalysed reaction is 2'-deoxyadenosine + H2O + H(+) = 2'-deoxyinosine + NH4(+). In terms of biological role, catalyzes the hydrolytic deamination of adenosine and 2-deoxyadenosine. The protein is Adenosine deaminase of Photorhabdus laumondii subsp. laumondii (strain DSM 15139 / CIP 105565 / TT01) (Photorhabdus luminescens subsp. laumondii).